The chain runs to 55 residues: Small ribosomal subunit protein eS31 (55 aa).

Zn(2+) is bound by residues Cys26, Cys29, Cys44, and Cys47.

It belongs to the eukaryotic ribosomal protein eS31 family. Part of the 30S ribosomal subunit. Requires Zn(2+) as cofactor.

The protein is Small ribosomal subunit protein eS31 of Archaeoglobus fulgidus (strain ATCC 49558 / DSM 4304 / JCM 9628 / NBRC 100126 / VC-16).